We begin with the raw amino-acid sequence, 382 residues long: Non-structural maintenance of chromosomes element 4 homolog A (382 aa).

Residues 1–21 (MSGDSSGRRPEGRGRGRDPHR) are compositionally biased toward basic and acidic residues. Residues 1 to 80 (MSGDSSGRRP…ASLEEETDPS (80 aa)) are disordered. Over residues 31 to 41 (RSPLSPGSRRG) the composition is skewed to low complexity. The span at 42–55 (AAPERREAPERPGL) shows a compositional bias: basic and acidic residues. Positions 56-78 (EDTEPSDSGDEMIDPASLEEETD) are enriched in acidic residues. A Phosphothreonine modification is found at threonine 342. Phosphoserine is present on serine 374.

The protein belongs to the NSE4 family. As to quaternary structure, component of the SMC5-SMC6 complex which consists at least of SMC5, SMC6, NSMCE2, NSMCE1, NSMCE4A or EID3 and NSMCE3. NSMCE1, NSMCE4A or EID3 and NSMCE3 probably form a subcomplex that bridges the head domains of the SMC5:SMC6 heterodimer. Interacts with NSMCE3.

It localises to the nucleus. The protein localises to the chromosome. It is found in the telomere. Its function is as follows. Component of the SMC5-SMC6 complex, a complex involved in repair of DNA double-strand breaks by homologous recombination. The complex may promote sister chromatid homologous recombination by recruiting the SMC1-SMC3 cohesin complex to double-strand breaks. The complex is required for telomere maintenance via recombination and mediates sumoylation of shelterin complex (telosome) components. This is Non-structural maintenance of chromosomes element 4 homolog A (NSMCE4A) from Bos taurus (Bovine).